The following is a 152-amino-acid chain: Pleckstrin homology-like domain family A member 2 (152 aa).

Phosphoserine is present on residues Ser3 and Ser42. The 93-residue stretch at 7–99 (VLREGELEKR…WNAAIALALI (93 aa)) folds into the PH domain. Positions 112 to 152 (SRQERTAPAAPAEDAVAAAAAAPSEPSEPSRPSPQPKPRTP) are disordered. Positions 118 to 138 (APAAPAEDAVAAAAAAPSEPS) are enriched in low complexity. The span at 140–152 (PSRPSPQPKPRTP) shows a compositional bias: pro residues. Phosphoserine occurs at positions 141 and 144. The residue at position 151 (Thr151) is a Phosphothreonine.

This sequence belongs to the PHLDA2 family. In terms of tissue distribution, expressed in placenta and adult prostate gland. In placenta, it is present in all cells of the villous cytotrophoblast. The protein is absent in cells from hydatidiform moles. Hydatidiform mole is a gestation characterized by abnormal development of both fetus and trophoblast. The majority of hydatidiform moles are associated with an excess of paternal to maternal genomes and are likely to result from the abnormal expression of imprinted genes (at protein level). Expressed at low levels in adult liver and lung, and fetal liver. Expressed in adult brain and neuroblastoma, medullablastoma and glioblastoma cell lines.

Its subcellular location is the cytoplasm. It localises to the membrane. Functionally, plays a role in regulating placenta growth. May act via its PH domain that competes with other PH domain-containing proteins, thereby preventing their binding to membrane lipids. This is Pleckstrin homology-like domain family A member 2 (PHLDA2) from Homo sapiens (Human).